A 463-amino-acid polypeptide reads, in one-letter code: MAASVFYGRLLAVATLRNHRPRTALGAAAQVLGSSGLFNNHGLQVQQQQQRNLSLHEYMSMELLQEAGVSIPKGCVAKSPDEAYAVAKKLGSKDVVIKAQVLAGGRGKGTFESGLKGGVKIVFSPEEAKAVSSQMIGKKLFTKQTGEKGRICNQVLVCERKYPRREYYFAITMERSFQGPVLIGSSQGGVNIEDVAAETPEAIITEPIDIEEGIKKEQALQLAQKMGFPPNIVESAAENMVKLYSLFLKYDATMIEINPMVEDSDGAVLCMDAKINFDSNSAYRQKKIFDLQDWTQEDERDKDAAQANLNYIGLDGNIGCLVNGAGLAMATMDIIKLHGGTPANFLDVGGGATVHQVTEAFKLITSDKKVLAILVNIFGGIMSCDVIAQGIVTALKDLEIKIPVVVRLQGTRVDDAKALIAGSGLKILACDDLDEAARMVVKLSEIVTLAKQAHVDVKFQLPI.

The N-terminal 53 residues, 1-53 (MAASVFYGRLLAVATLRNHRPRTALGAAAQVLGSSGLFNNHGLQVQQQQQRNL), are a transit peptide targeting the mitochondrion. The ATP-grasp domain maps to 61–288 (MELLQEAGVS…SNSAYRQKKI (228 aa)). Lysine 78 carries the post-translational modification N6-acetyllysine. Tyrosine 84 carries the post-translational modification Phosphotyrosine. Residue lysine 88 is modified to N6-acetyllysine; alternate. Lysine 88 bears the N6-succinyllysine; alternate mark. Residues lysine 98 and 105 to 107 (GRG) contribute to the ATP site. 4 positions are modified to N6-acetyllysine: lysine 129, lysine 139, lysine 143, and lysine 216. Residues asparagine 258 and aspartate 272 each contribute to the Mg(2+) site. Serine 279 is subject to Phosphoserine. Asparagine 323 is a substrate binding site. At threonine 341 the chain carries Phosphothreonine. An N6-acetyllysine modification is found at lysine 368. 380–382 (GIM) lines the substrate pocket.

The protein belongs to the succinate/malate CoA ligase beta subunit family. ATP-specific subunit beta subfamily. In terms of assembly, heterodimer of an alpha and a beta subunit. The beta subunit determines specificity for ATP. Interacts with ALAS2. It depends on Mg(2+) as a cofactor.

It localises to the mitochondrion. It catalyses the reaction succinate + ATP + CoA = succinyl-CoA + ADP + phosphate. The protein operates within carbohydrate metabolism; tricarboxylic acid cycle; succinate from succinyl-CoA (ligase route): step 1/1. Its function is as follows. ATP-specific succinyl-CoA synthetase functions in the citric acid cycle (TCA), coupling the hydrolysis of succinyl-CoA to the synthesis of ATP and thus represents the only step of substrate-level phosphorylation in the TCA. The beta subunit provides nucleotide specificity of the enzyme and binds the substrate succinate, while the binding sites for coenzyme A and phosphate are found in the alpha subunit. The chain is Succinate--CoA ligase [ADP-forming] subunit beta, mitochondrial from Macaca fascicularis (Crab-eating macaque).